A 196-amino-acid chain; its full sequence is Peptide deformylase (196 aa).

Residues Cys-123 and His-166 each coordinate Fe cation. Residue Glu-167 is part of the active site. A Fe cation-binding site is contributed by His-170.

Belongs to the polypeptide deformylase family. Fe(2+) is required as a cofactor.

The enzyme catalyses N-terminal N-formyl-L-methionyl-[peptide] + H2O = N-terminal L-methionyl-[peptide] + formate. Removes the formyl group from the N-terminal Met of newly synthesized proteins. Requires at least a dipeptide for an efficient rate of reaction. N-terminal L-methionine is a prerequisite for activity but the enzyme has broad specificity at other positions. The sequence is that of Peptide deformylase from Lactococcus lactis subsp. lactis (strain IL1403) (Streptococcus lactis).